We begin with the raw amino-acid sequence, 126 residues long: Large ribosomal subunit protein bL12 (126 aa).

This sequence belongs to the bacterial ribosomal protein bL12 family. In terms of assembly, homodimer. Part of the ribosomal stalk of the 50S ribosomal subunit. Forms a multimeric L10(L12)X complex, where L10 forms an elongated spine to which 2 to 4 L12 dimers bind in a sequential fashion. Binds GTP-bound translation factors.

Functionally, forms part of the ribosomal stalk which helps the ribosome interact with GTP-bound translation factors. Is thus essential for accurate translation. This is Large ribosomal subunit protein bL12 from Rhizobium meliloti (strain 1021) (Ensifer meliloti).